The primary structure comprises 277 residues: 2-dehydro-3-deoxyphosphooctonate aldolase (277 aa).

Belongs to the KdsA family.

The protein localises to the cytoplasm. It carries out the reaction D-arabinose 5-phosphate + phosphoenolpyruvate + H2O = 3-deoxy-alpha-D-manno-2-octulosonate-8-phosphate + phosphate. Its pathway is carbohydrate biosynthesis; 3-deoxy-D-manno-octulosonate biosynthesis; 3-deoxy-D-manno-octulosonate from D-ribulose 5-phosphate: step 2/3. The protein operates within bacterial outer membrane biogenesis; lipopolysaccharide biosynthesis. The protein is 2-dehydro-3-deoxyphosphooctonate aldolase of Alkalilimnicola ehrlichii (strain ATCC BAA-1101 / DSM 17681 / MLHE-1).